Here is a 119-residue protein sequence, read N- to C-terminus: Putative yippee-like protein Os10g0369500 (119 aa).

Residues 21-118 (AVLKCRRCRV…LEKARMWKEA (98 aa)) form the Yippee domain. Zn(2+)-binding residues include cysteine 25, cysteine 28, cysteine 81, and cysteine 84.

Belongs to the yippee family.

The chain is Putative yippee-like protein Os10g0369500 from Oryza sativa subsp. japonica (Rice).